The primary structure comprises 175 residues: Probable DNA replication complex GINS protein PSF2 (175 aa).

Belongs to the GINS2/PSF2 family. As to quaternary structure, component of the GINS complex which is a heterotetramer of SLD5, PSF1, PSF2 and PSF3.

It is found in the nucleus. Its function is as follows. The GINS complex plays an essential role in the initiation of DNA replication. The chain is Probable DNA replication complex GINS protein PSF2 from Encephalitozoon cuniculi (strain GB-M1) (Microsporidian parasite).